The primary structure comprises 589 residues: Multidrug transporter FLR2 (589 aa).

A disordered region spans residues 50–116 (KEEMKQDNQT…SSTKDASKPE (67 aa)). A compositionally biased stretch (low complexity) spans 56–73 (DNQTSTDSMSTSTQQETD). Asparagine 57 carries an N-linked (GlcNAc...) asparagine glycan. The span at 107–116 (SSTKDASKPE) shows a compositional bias: basic and acidic residues. A glycan (N-linked (GlcNAc...) asparagine) is linked at asparagine 136. 12 consecutive transmembrane segments (helical) span residues 143-163 (TFVI…SSIY), 179-199 (VVGT…PIIF), 211-231 (MPLY…CALV), 234-254 (IAGL…VLAT), 275-295 (WAVG…AMVV), 301-321 (WIFW…IFFF), 378-398 (PIIL…YLFF), 417-437 (GLAF…LIIF), 455-475 (LFLI…FFFG), 480-500 (IHWI…FNLF), 516-536 (ASVF…FPLF), and 551-571 (VAWG…IPFV).

It belongs to the major facilitator superfamily.

The protein resides in the cell membrane. Functionally, multidrug transporter that confers resistance to 5-flucytosine (5-FC) and clotrimazole. Further confers azole drug resistance. Plays direct roles in extrusion of 5-flucytosine and clotrimazole. This is Multidrug transporter FLR2 from Candida glabrata (strain ATCC 2001 / BCRC 20586 / JCM 3761 / NBRC 0622 / NRRL Y-65 / CBS 138) (Yeast).